We begin with the raw amino-acid sequence, 304 residues long: tRNA pseudouridine synthase B (304 aa).

Asp40 acts as the Nucleophile in catalysis.

It belongs to the pseudouridine synthase TruB family. Type 1 subfamily.

It catalyses the reaction uridine(55) in tRNA = pseudouridine(55) in tRNA. In terms of biological role, responsible for synthesis of pseudouridine from uracil-55 in the psi GC loop of transfer RNAs. This chain is tRNA pseudouridine synthase B, found in Halalkalibacterium halodurans (strain ATCC BAA-125 / DSM 18197 / FERM 7344 / JCM 9153 / C-125) (Bacillus halodurans).